The sequence spans 89 residues: Otospiralin (89 aa).

A signal peptide spans 1-21 (MQACMVPGLALCLLLGPLAGA).

This sequence belongs to the otospiralin family. Ear specific.

It localises to the secreted. May be essential for the survival of the neurosensory epithelium of the inner ear. The polypeptide is Otospiralin (OTOS) (Homo sapiens (Human)).